The sequence spans 155 residues: Transcription antitermination protein NusB (155 aa).

This sequence belongs to the NusB family.

In terms of biological role, involved in transcription antitermination. Required for transcription of ribosomal RNA (rRNA) genes. Binds specifically to the boxA antiterminator sequence of the ribosomal RNA (rrn) operons. The polypeptide is Transcription antitermination protein NusB (Vibrio parahaemolyticus serotype O3:K6 (strain RIMD 2210633)).